Consider the following 550-residue polypeptide: Chaperonin GroEL (550 aa).

Residues 30–33 (TLGP), lysine 51, 87–91 (DGTTT), glycine 415, 479–481 (NAA), and aspartate 495 each bind ATP.

It belongs to the chaperonin (HSP60) family. In terms of assembly, forms a cylinder of 14 subunits composed of two heptameric rings stacked back-to-back. Interacts with the co-chaperonin GroES.

Its subcellular location is the cytoplasm. It carries out the reaction ATP + H2O + a folded polypeptide = ADP + phosphate + an unfolded polypeptide.. Its function is as follows. Together with its co-chaperonin GroES, plays an essential role in assisting protein folding. The GroEL-GroES system forms a nano-cage that allows encapsulation of the non-native substrate proteins and provides a physical environment optimized to promote and accelerate protein folding. The chain is Chaperonin GroEL from Aromatoleum aromaticum (strain DSM 19018 / LMG 30748 / EbN1) (Azoarcus sp. (strain EbN1)).